The following is a 298-amino-acid chain: ATP synthase gamma chain (298 aa).

It belongs to the ATPase gamma chain family. As to quaternary structure, F-type ATPases have 2 components, CF(1) - the catalytic core - and CF(0) - the membrane proton channel. CF(1) has five subunits: alpha(3), beta(3), gamma(1), delta(1), epsilon(1). CF(0) has three main subunits: a, b and c.

It is found in the cell inner membrane. Produces ATP from ADP in the presence of a proton gradient across the membrane. The gamma chain is believed to be important in regulating ATPase activity and the flow of protons through the CF(0) complex. This chain is ATP synthase gamma chain, found in Zymomonas mobilis subsp. mobilis (strain ATCC 31821 / ZM4 / CP4).